Reading from the N-terminus, the 686-residue chain is tRNA wybutosine-synthesizing protein 4 (686 aa).

The interval 1 to 22 is disordered; it reads MGPRSRQRRTGTVQSTNDSSSL. Polar residues predominate over residues 10–22; it reads TGTVQSTNDSSSL. S-adenosyl-L-methionine-binding positions include R59, G89, D114, 161-162, and E188; that span reads DL.

The protein belongs to the methyltransferase superfamily. LCMT family. In terms of assembly, interacts with RNF144B/IBRDC2.

It catalyses the reaction 7-[(3S)-3-amino-3-carboxypropyl]wyosine(37) in tRNA(Phe) + S-adenosyl-L-methionine = 7-[(3S)-(3-amino-3-methoxycarbonyl)propyl]wyosine(37) in tRNA(Phe) + S-adenosyl-L-homocysteine. It carries out the reaction 7-[(3S)-(3-amino-3-methoxycarbonyl)propyl]wyosine(37) in tRNA(Phe) + S-adenosyl-L-methionine + CO2 = wybutosine(37) in tRNA(Phe) + S-adenosyl-L-homocysteine + 2 H(+). It participates in tRNA modification; wybutosine-tRNA(Phe) biosynthesis. Functionally, probable S-adenosyl-L-methionine-dependent methyltransferase that acts as a component of the wybutosine biosynthesis pathway. Wybutosine is a hyper modified guanosine with a tricyclic base found at the 3'-position adjacent to the anticodon of eukaryotic phenylalanine tRNA. May methylate the carboxyl group of leucine residues to form alpha-leucine ester residues. This is tRNA wybutosine-synthesizing protein 4 (Lcmt2) from Rattus norvegicus (Rat).